Consider the following 266-residue polypeptide: Mitochondrial import inner membrane translocase subunit Tim29 (266 aa).

The transit peptide at 1 to 37 (MVTAALKRFWSGGHGEAGGEAGGATTVAVKPGLWTRL) directs the protein to the mitochondrion. The Mitochondrial matrix portion of the chain corresponds to 38–65 (STWAGALLRDYAEACGDAAAAARARPGR). A helical membrane pass occupies residues 66 to 83 (AALYVGLLGGAAACCALA). Over 84-266 (PSEAAFEEAL…DSLVQSDVSR (183 aa)) the chain is Mitochondrial intermembrane.

In terms of assembly, component of the TIM22 complex, which core is composed of TIMM22, associated with TIMM10 (TIMM10A and/or TIMM10B), TIMM9, AGK and TIMM29. Interacts with TIMM10B; the interaction is direct. Interacts with TOMM40; linking the TIM22 complex to the TOM complex. Interacts with TIMM22 (when oxidized); the interaction is direct.

It localises to the mitochondrion inner membrane. In terms of biological role, component of the TIM22 complex, a complex that mediates the import and insertion of multi-pass transmembrane proteins into the mitochondrial inner membrane. The TIM22 complex forms a twin-pore translocase that uses the membrane potential as the external driving force. Required for the stability of the TIM22 complex and functions in the assembly of the TIMM22 protein into the TIM22 complex. May facilitate cooperation between TIM22 and TOM complexes by interacting with TOMM40. This Mus musculus (Mouse) protein is Mitochondrial import inner membrane translocase subunit Tim29 (Timm29).